The following is a 537-amino-acid chain: Asparagine-rich protein (537 aa).

Disordered stretches follow at residues 1–22 (YNNN…QNTN), 187–254 (NMNI…NNNF), 336–372 (YNNN…YGYD), 399–479 (LNNN…DDWG), and 509–528 (DLSK…MKKD). 2 stretches are compositionally biased toward low complexity: residues 336–347 (YNNNESNTANPN) and 399–469 (LNNN…NQNN). Residues 470–479 (NEDEDDDDWG) show a composition bias toward acidic residues. Residues 509 to 518 (DLSKKGNDGK) are compositionally biased toward basic and acidic residues.

The protein is Asparagine-rich protein of Plasmodium falciparum.